The following is a 1581-amino-acid chain: Mediator of RNA polymerase II transcription subunit 1 (1581 aa).

The interval methionine 1–asparagine 670 is interaction with the Mediator complex and THRA. Positions methionine 16 to glycine 590 are interaction with ESR1. 2 interaction with the Mediator complex regions span residues phenylalanine 108–threonine 212 and serine 215–glycine 390. The segment at proline 405–methionine 644 is interaction with THRA. Residues proline 542–glutamate 788 form an interaction with VDR region. Serine 588 is subject to Phosphoserine. The LXXLL motif 1 motif lies at leucine 604–leucine 608. Disordered stretches follow at residues glutamine 609 to glutamate 705, lysine 791 to leucine 819, leucine 868 to lysine 895, and glutamate 947 to isoleucine 1566. Over residues proline 622–valine 632 the composition is skewed to pro residues. The interval proline 622–lysine 701 is interaction with PPARGC1A and THRA. Residues leucine 645 to leucine 649 carry the LXXLL motif 2 motif. Over residues glutamine 655–serine 675 the composition is skewed to polar residues. Positions aspartate 656–glutamine 1065 are interaction with ESR1. Serine 664 carries the post-translational modification Phosphoserine. Residues cysteine 681 to methionine 715 are interaction with GATA1. Residues lysine 690–glutamate 705 show a composition bias toward basic and acidic residues. Serine 794 carries the phosphoserine modification. Residue threonine 804 is modified to Phosphothreonine. Residues arginine 807–leucine 819 are compositionally biased toward polar residues. Residues glutamine 874–alanine 901 carry the Integrase domain-binding motif (IBM) motif. Phosphoserine is present on residues serine 886 and serine 952. Basic and acidic residues predominate over residues leucine 962–glutamate 973. Threonine 1031 carries the post-translational modification Phosphothreonine; by MAPK1 or MAPK3. Residues proline 1033–threonine 1050 are compositionally biased toward low complexity. Phosphothreonine occurs at positions 1050 and 1056. Composition is skewed to low complexity over residues serine 1077–serine 1093, serine 1100–serine 1111, and serine 1119–serine 1156. Serine 1156 carries the phosphoserine modification. Positions glycine 1162–histidine 1195 are enriched in polar residues. Residue lysine 1177 is modified to N6-acetyllysine. Serine 1207 is subject to Phosphoserine. Threonine 1215 is subject to Phosphothreonine. Low complexity-rich tracts occupy residues serine 1218–serine 1227 and methionine 1234–lysine 1293. Phosphoserine is present on serine 1223. The segment at leucine 1249–leucine 1421 is interaction with TP53. Phosphoserine is present on serine 1302. A compositionally biased stretch (polar residues) spans glycine 1330–asparagine 1345. Residue serine 1347 is modified to Phosphoserine. Basic and acidic residues predominate over residues glutamine 1352–lysine 1364. Phosphoserine is present on residues serine 1403 and serine 1433. Composition is skewed to polar residues over residues methionine 1425–threonine 1440 and proline 1448–serine 1482. Threonine 1440 bears the Phosphothreonine mark. Threonine 1457 is modified (phosphothreonine; by MAPK1 or MAPK3). 5 positions are modified to phosphoserine: serine 1463, serine 1465, serine 1479, serine 1481, and serine 1482. A compositionally biased stretch (basic residues) spans lysine 1496 to lysine 1505. The span at lysine 1506–lysine 1522 shows a compositional bias: basic and acidic residues. At lysine 1529 the chain carries N6-acetyllysine. Over residues tryptophan 1533–leucine 1552 the composition is skewed to polar residues.

The protein belongs to the Mediator complex subunit 1 family. In terms of assembly, component of the Mediator complex, which is composed of MED1, MED4, MED6, MED7, MED8, MED9, MED10, MED11, MED12, MED13, MED13L, MED14, MED15, MED16, MED17, MED18, MED19, MED20, MED21, MED22, MED23, MED24, MED25, MED26, MED27, MED29, MED30, MED31, CCNC, CDK8 and CDC2L6/CDK11. The MED12, MED13, CCNC and CDK8 subunits form a distinct module termed the CDK8 module. Mediator containing the CDK8 module is less active than Mediator lacking this module in supporting transcriptional activation. Individual preparations of the Mediator complex lacking one or more distinct subunits have been variously termed ARC, CRSP, DRIP, PC2, SMCC and TRAP. This subunit specifically interacts with a number of nuclear receptors in a ligand-dependent fashion including AR, ESR1, ESR2, PPARA, PPARG, RORA, RXRA, RXRG, THRA, THRB and VDR. Interacts with CTNNB1, GABPA, GLI3, PPARGC1A and TP53. Interacts with GATA1 and YWHAH. Interacts with CLOCK; this interaction requires the presence of THRAP3. Interacts with CCAR1. Interacts with NR4A3. Interacts (via IBM motif) with PSIP1 (via IBD domain); phosphorylation increases its affinity for PSIP1. Interacts with USP22. In terms of processing, phosphorylated by MAPK1 or MAPK3 during G2/M phase which may enhance protein stability and promote entry into the nucleolus. Phosphorylation increases its interaction with PSIP1.

It localises to the nucleus. Component of the Mediator complex, a coactivator involved in the regulated transcription of nearly all RNA polymerase II-dependent genes. Mediator functions as a bridge to convey information from gene-specific regulatory proteins to the basal RNA polymerase II transcription machinery. Mediator is recruited to promoters by direct interactions with regulatory proteins and serves as a scaffold for the assembly of a functional preinitiation complex with RNA polymerase II and the general transcription factors. Acts as a coactivator for GATA1-mediated transcriptional activation during erythroid differentiation of K562 erythroleukemia cells. The chain is Mediator of RNA polymerase II transcription subunit 1 (MED1) from Pongo abelii (Sumatran orangutan).